Here is a 393-residue protein sequence, read N- to C-terminus: S-adenosylmethionine synthase 3 (393 aa).

Position 43 (glutamate 43) interacts with K(+). Residues glutamate 56 and glutamine 99 each coordinate L-methionine. ATP contacts are provided by residues 167 to 169, 235 to 238, aspartate 246, 252 to 253, alanine 269, lysine 273, and lysine 277; these read DGK, SGRF, and RK. Residue aspartate 246 participates in L-methionine binding. Lysine 277 is an L-methionine binding site.

It belongs to the AdoMet synthase family. As to quaternary structure, homotetramer. Requires Mn(2+) as cofactor. The cofactor is Mg(2+). It depends on Co(2+) as a cofactor. K(+) is required as a cofactor.

The protein localises to the cytoplasm. It carries out the reaction L-methionine + ATP + H2O = S-adenosyl-L-methionine + phosphate + diphosphate. Its pathway is amino-acid biosynthesis; S-adenosyl-L-methionine biosynthesis; S-adenosyl-L-methionine from L-methionine: step 1/1. Catalyzes the formation of S-adenosylmethionine from methionine and ATP. The reaction comprises two steps that are both catalyzed by the same enzyme: formation of S-adenosylmethionine (AdoMet) and triphosphate, and subsequent hydrolysis of the triphosphate. This Actinidia chinensis var. chinensis (Chinese soft-hair kiwi) protein is S-adenosylmethionine synthase 3 (SAM3).